Here is a 448-residue protein sequence, read N- to C-terminus: Extracellular serine protease (448 aa).

An N-terminal signal peptide occupies residues 1-20 (MKLSHLSLAIISAITLAACG). The disordered stretch occupies residues 87 to 109 (KELENQASDDEVDPTKTGVVGNL).

The protein belongs to the peptidase S17 family. A divalent metal cation serves as cofactor.

Functionally, this enzyme is a chymotrypsin-like serine protease. Degrades a variety of substrates present in the skin and hoof of the sheep, including elastin, keratin, fibrinogen and collagen. It seems to play an important role in the pathogenesis of sheep footrot. In Dichelobacter nodosus (Bacteroides nodosus), this protein is Extracellular serine protease (prvA).